We begin with the raw amino-acid sequence, 258 residues long: Ubiquinone/menaquinone biosynthesis C-methyltransferase UbiE (258 aa).

Residues T81, D102, and 130-131 (NA) contribute to the S-adenosyl-L-methionine site.

It belongs to the class I-like SAM-binding methyltransferase superfamily. MenG/UbiE family.

It carries out the reaction a 2-demethylmenaquinol + S-adenosyl-L-methionine = a menaquinol + S-adenosyl-L-homocysteine + H(+). The enzyme catalyses a 2-methoxy-6-(all-trans-polyprenyl)benzene-1,4-diol + S-adenosyl-L-methionine = a 5-methoxy-2-methyl-3-(all-trans-polyprenyl)benzene-1,4-diol + S-adenosyl-L-homocysteine + H(+). Its pathway is quinol/quinone metabolism; menaquinone biosynthesis; menaquinol from 1,4-dihydroxy-2-naphthoate: step 2/2. It functions in the pathway cofactor biosynthesis; ubiquinone biosynthesis. Functionally, methyltransferase required for the conversion of demethylmenaquinol (DMKH2) to menaquinol (MKH2) and the conversion of 2-polyprenyl-6-methoxy-1,4-benzoquinol (DDMQH2) to 2-polyprenyl-3-methyl-6-methoxy-1,4-benzoquinol (DMQH2). The chain is Ubiquinone/menaquinone biosynthesis C-methyltransferase UbiE from Allorhizobium ampelinum (strain ATCC BAA-846 / DSM 112012 / S4) (Agrobacterium vitis (strain S4)).